The chain runs to 495 residues: Cornulin (495 aa).

In terms of domain architecture, EF-hand spans 49–84 (HDPATVDEVLRLLDEDHTGTVEFKEFLVLVFKVAQA). The Ca(2+) site is built by aspartate 62, aspartate 64, threonine 66, threonine 68, and glutamate 73. 2 disordered regions span residues 96–439 (ACGS…TVVG) and 460–481 (LHTS…KRGI). Residues 99-110 (SQESGSLHSGAS) are compositionally biased toward polar residues. Residues 137 to 151 (HRQSQQGSRGQNRPG) show a composition bias toward low complexity. The segment covering 152 to 194 (VQTQGQATGSAWVSSYDRQAESQSQERISPQIQLSGQTEQTQK) has biased composition (polar residues). Positions 196 to 222 (GEGKRNQTTEMRPERQPQTREQDRAHQ) are enriched in basic and acidic residues. A compositionally biased stretch (low complexity) spans 226–242 (TVTGSGTQTQAGATQTV). 2 stretches are compositionally biased toward polar residues: residues 243–282 (EQDS…SQAV) and 290–303 (QAGT…QTVE). A compositionally biased stretch (low complexity) spans 307 to 324 (SHQTGSTSTQTQESTNGQ). A compositionally biased stretch (polar residues) spans 334–355 (GRSQTSQAVTGGHTQIQAGSHT). Over residues 374–385 (QGQTQTQPGSGQ) the composition is skewed to low complexity. 2 stretches are compositionally biased toward polar residues: residues 403–420 (QAQT…WSST) and 460–473 (LHTS…QDAA).

Belongs to the S100-fused protein family. Homodimer. As to expression, expressed in the basal skin layer (at protein level). Squamous epithelia cell-specific. Expressed in the esophagus (periphery of the cells of the granular and the upper spinous layers), foreskin (granular and lower cornified cells), scalp skin (granular layer), inner root sheath of the hair follicle and in primary keratinocytes (at protein level). Expressed in the squamous epithelium of the cervix, esophagus, foreskin and larynx. Expressed in the fetal bladder and scalp skin. Expressed at very low levels in the lung, kidney, uterus, skeletal muscle, heart and fetal brain. Undetectable or barely detectable in esophageal and oral squamous cell carcinoma compared with the matched adjacent normal esophageal mucosa. Undetectable or barely detectable in larynx and esophagus from patients with pH-documented laryngopharyngeal reflux (LPR).

The protein resides in the cytoplasm. In terms of biological role, promotes cell proliferation, G1/S cell cycle progression and induces expression of the cell cycle regulator CCND1. Regulates proliferation induced by pro-inflammatory cytokine response via activation of NFKB1 and PI3K/AKT signaling pathways. The polypeptide is Cornulin (CRNN) (Homo sapiens (Human)).